Reading from the N-terminus, the 455-residue chain is Guanine/hypoxanthine permease GhxQ (455 aa).

Over Met-1–Val-31 the chain is Cytoplasmic. A helical transmembrane segment spans residues Arg-32–Met-55. At Leu-56–Ala-65 the chain is on the periplasmic side. The helical transmembrane segment at Val-66 to Trp-84 threads the bilayer. The Cytoplasmic portion of the chain corresponds to Ala-85–Asn-86. Residues Leu-87–Phe-103 form a discontinuously helical membrane-spanning segment. Residues Ser-104–Val-115 are Periplasmic-facing. Residues Ala-116–Val-135 form a helical membrane-spanning segment. At Arg-136 to Ile-147 the chain is on the cytoplasmic side. A helical membrane pass occupies residues Ala-148–Gly-168. Over Met-169–Thr-186 the chain is Periplasmic. The helical transmembrane segment at Ser-187–Glu-204 threads the bilayer. At Lys-205–Val-208 the chain is on the cytoplasmic side. Residues Pro-209–Pro-228 form a helical membrane-spanning segment. At Ala-229–Gln-260 the chain is on the periplasmic side. The chain crosses the membrane as a helical span at residues Pro-261 to Ala-289. The Cytoplasmic segment spans residues Asn-290 to Gly-302. The helical transmembrane segment at Lys-303–Val-318 threads the bilayer. At Gly-319–Ala-320 the chain is on the periplasmic side. Residues Ala-321–Gly-336 traverse the membrane as a discontinuously helical segment. Residues Gly-337–Gly-340 are Cytoplasmic-facing. The chain crosses the membrane as a helical span at residues Leu-341 to Phe-355. At Leu-356–Tyr-366 the chain is on the periplasmic side. The helical transmembrane segment at Ala-367–Leu-386 threads the bilayer. The Cytoplasmic portion of the chain corresponds to Asp-387–Phe-391. Positions Ile-392–Phe-427 form an intramembrane region, discontinuously helical. The Cytoplasmic portion of the chain corresponds to Ala-428–Ile-455.

This sequence belongs to the nucleobase:cation symporter-2 (NCS2) (TC 2.A.40) family. Azg-like subfamily.

It localises to the cell membrane. In terms of biological role, high-affinity transporter for guanine and hypoxanthine. This chain is Guanine/hypoxanthine permease GhxQ (ghxQ), found in Escherichia coli (strain K12).